We begin with the raw amino-acid sequence, 402 residues long: uncharacterized protein (402 aa).

Belongs to the peptidase M20 family.

This is an uncharacterized protein from Sinorhizobium fredii (strain NBRC 101917 / NGR234).